Reading from the N-terminus, the 108-residue chain is Small ribosomal subunit protein uS10 (108 aa).

It belongs to the universal ribosomal protein uS10 family. In terms of assembly, part of the 30S ribosomal subunit.

Involved in the binding of tRNA to the ribosomes. The protein is Small ribosomal subunit protein uS10 of Rhodopirellula baltica (strain DSM 10527 / NCIMB 13988 / SH1).